We begin with the raw amino-acid sequence, 692 residues long: Vitamin B12-dependent ribonucleoside-diphosphate reductase (692 aa).

Residues 7-95 enclose the ATP-cone domain; sequence AKVRRRDGTL…IYRQRRAELR (89 aa). Residues serine 177, 192–193, glycine 221, 375–379, and 520–524 each bind substrate; these read GC, NPCGE, and PTGTI. Residues cysteine 193 and cysteine 388 are joined by a disulfide bond. The active-site Proton acceptor is the asparagine 375. Cysteine 377 acts as the Cysteine radical intermediate in catalysis. Residue glutamate 379 is the Proton acceptor of the active site.

It belongs to the ribonucleoside diphosphate reductase class-2 family. The cofactor is adenosylcob(III)alamin.

The catalysed reaction is a 2'-deoxyribonucleoside 5'-diphosphate + [thioredoxin]-disulfide + H2O = a ribonucleoside 5'-diphosphate + [thioredoxin]-dithiol. Its function is as follows. Provides the precursors necessary for DNA synthesis. Catalyzes the biosynthesis of deoxyribonucleotides from the corresponding ribonucleotides. The protein is Vitamin B12-dependent ribonucleoside-diphosphate reductase (nrdZ) of Mycobacterium tuberculosis (strain CDC 1551 / Oshkosh).